Reading from the N-terminus, the 264-residue chain is Polyneuridine aldehyde esterase (264 aa).

The propeptide occupies M1 to N6. In terms of domain architecture, AB hydrolase-1 spans H12 to T122. Catalysis depends on residues S87, D216, and H244. Position 87 (S87) interacts with 16-epivellosimine.

It belongs to the AB hydrolase superfamily. As to quaternary structure, homodimer; homodimerizes in aqueous solutions at pH 7.0. Mainly expressed in roots and, to a lower level, in leaves.

It catalyses the reaction polyneuridine aldehyde + H2O = 16-epivellosimine + methanol + CO2. The protein operates within alkaloid biosynthesis; ajmaline biosynthesis. Its activity is regulated as follows. Inhibited by DEPC and HgCl(2). Its function is as follows. Hydrolase involved in the biosynthesis of ajmaline-type monoterpenoid indole alkaloids (MIAs) natural products, important plant-derived pharmaceuticals used in the therapy of heart disorders. Catalyzes the hydrolysis of polyneuridine aldehyde into epi-vellosimine, precursor of vomilenine, an intermediate chemical in the biosynthesis of ajmaline. The sequence is that of Polyneuridine aldehyde esterase from Rauvolfia serpentina (Serpentine wood).